We begin with the raw amino-acid sequence, 309 residues long: Protein FdhE (309 aa).

Belongs to the FdhE family.

The protein resides in the cytoplasm. In terms of biological role, necessary for formate dehydrogenase activity. The protein is Protein FdhE of Salmonella choleraesuis (strain SC-B67).